A 556-amino-acid chain; its full sequence is Acetyl-coenzyme A thioesterase (556 aa).

A HotDog ACOT-type 1 domain is found at 6–118 (APGEVLMSQA…FSTFVAKPVG (113 aa)). Lysine 34 bears the N6-succinyllysine mark. Residues 54 to 56 (TAS) and 83 to 85 (STS) contribute to the CoA site. Position 97 is an N6-succinyllysine (lysine 97). Residue arginine 145 coordinates CoA. N6-succinyllysine occurs at positions 160 and 229. The region spanning 180–295 (MGTSVQSIEL…FLIYNAVDDQ (116 aa)) is the HotDog ACOT-type 2 domain. Position 235 to 237 (235 to 237 (KFR)) interacts with CoA. In terms of domain architecture, START spans 327-536 (GRKYVISHKK…GGWSKSIEEA (210 aa)).

In terms of assembly, homodimer or homotetramer.

Its subcellular location is the cytoplasm. The protein localises to the cytosol. The catalysed reaction is acetyl-CoA + H2O = acetate + CoA + H(+). It catalyses the reaction butanoyl-CoA + H2O = butanoate + CoA + H(+). The enzyme catalyses hexanoyl-CoA + H2O = hexanoate + CoA + H(+). It functions in the pathway lipid metabolism; fatty acid metabolism. Allosterically regulated by ATP (activator) and ADP (inhibitor). Cold labile, it dissociates into inactive monomers at low temperature. Its function is as follows. Catalyzes the hydrolysis of acyl-CoAs into free fatty acids and coenzyme A (CoASH), regulating their respective intracellular levels. Preferentially hydrolyzes acetyl-CoA. The polypeptide is Acetyl-coenzyme A thioesterase (Acot12) (Mus musculus (Mouse)).